The primary structure comprises 323 residues: Ficolin-2 (323 aa).

Positions 1–26 (MDTRGVAAAMRPLVLLVAFLCTAAPA) are cleaved as a signal peptide. Residues 52-102 (GLPGAAGPKGEAGASGPKGGQGPPGAPGEPGPPGPKGDRGEKGEPGPKGES) enclose the Collagen-like domain. A compositionally biased stretch (low complexity) spans 55 to 66 (GAAGPKGEAGAS). The disordered stretch occupies residues 55 to 107 (GAAGPKGEAGASGPKGGQGPPGAPGEPGPPGPKGDRGEKGEPGPKGESWETEQ). The span at 75 to 86 (PGAPGEPGPPGP) shows a compositional bias: pro residues. Over residues 87-102 (KGDRGEKGEPGPKGES) the composition is skewed to basic and acidic residues. One can recognise a Fibrinogen C-terminal domain in the interval 106 to 323 (EQCLTGPRTC…KVSEMKFRAT (218 aa)). 2 disulfides stabilise this stretch: cysteine 108-cysteine 136 and cysteine 115-cysteine 143. N-linked (GlcNAc...) asparagine glycosylation occurs at asparagine 249. Aspartate 259, aspartate 261, and serine 265 together coordinate Ca(2+). A disulfide bridge connects residues cysteine 267 and cysteine 280. Asparagine 302 and asparagine 310 each carry an N-linked (GlcNAc...) asparagine glycan.

It belongs to the ficolin lectin family. As to quaternary structure, homotrimer. Interacts with elastin. Interacts with MASP1 and MASP2. In terms of tissue distribution, mainly expressed in skeletal muscle.

The protein resides in the secreted. In terms of biological role, may function in innate immunity through activation of the lectin complement pathway. Calcium-dependent and GlcNAc-binding lectin. The chain is Ficolin-2 (FCN2) from Sus scrofa (Pig).